A 219-amino-acid chain; its full sequence is Germin-like protein subfamily 2 member 2 (219 aa).

A signal peptide spans 1–22; that stretch reads MMNSRISIIIALSCIMITSIRA. Residues Cys32 and Cys47 are joined by a disulfide bond. N-linked (GlcNAc...) asparagine glycans are attached at residues Asn52 and Asn70. In terms of domain architecture, Cupin type-1 spans 59-209; that stretch reads FFAGISKPAV…TFQVGSKMVD (151 aa). Positions 109, 111, 116, and 155 each coordinate Mn(2+).

It belongs to the germin family. Oligomer (believed to be a pentamer but probably hexamer).

It is found in the secreted. The protein resides in the extracellular space. It localises to the apoplast. Functionally, may play a role in plant defense. Probably has no oxalate oxidase activity even if the active site is conserved. This is Germin-like protein subfamily 2 member 2 from Arabidopsis thaliana (Mouse-ear cress).